The following is a 393-amino-acid chain: Myb-related transcription factor, partner of profilin (393 aa).

Positions 1–11 (MASATAAAAPG) are enriched in low complexity. The segment at 1 to 21 (MASATAAAAPGEAEETTRLRK) is disordered. Positions 16 to 88 (TTRLRKPRFS…EVQKRWNDFK (73 aa)) constitute a Myb-like domain. The short motif at 87–90 (FKRR) is the Nuclear localization signal element. Disordered stretches follow at residues 125–254 (GPGV…EQSL), 290–323 (PLLPGTPADPLPPPPPPPPPPPPKPVLPPSAPKV), and 348–393 (IISP…WKSP). Low complexity predominate over residues 142-157 (AAASSQPQASTASTQR). Residues 160–171 (LSEDRRQDRRAD) are compositionally biased toward basic and acidic residues. The segment covering 173–184 (PAQSKGGSSSPE) has biased composition (polar residues). Composition is skewed to pro residues over residues 219-229 (PPLPAPPPPPT), 238-247 (SPSPTPPRPT), 296-320 (PADPLPPPPPPPPPPPPKPVLPPSA), and 359-368 (KPLPPAPPLP). The segment covering 375–393 (HKRRKGFPTRKRRGRWKSP) has biased composition (basic residues). 2 consecutive short sequence motifs (nuclear localization signal) follow at residues 376-379 (KRRK) and 384-387 (RKRR).

Interacts with PFN1. Homodimer and heterodimer with PFN1. As to expression, ubiquitous. Highly expressed in brain, liver and testis. Moderate expression in heart, lung and skeletal muscle. Low expression in spleen and kidney.

The protein localises to the nucleus. In terms of biological role, transcriptional repressor; DNA-binding protein that specifically recognizes the core sequence 5'-YAAC[GT]G-3'. Dimerization with PFN1 reduces its DNA-binding capacity. This chain is Myb-related transcription factor, partner of profilin (Mypop), found in Mus musculus (Mouse).